A 522-amino-acid polypeptide reads, in one-letter code: Zinc finger protein 892 (522 aa).

2 disordered regions span residues 1 to 22 (MEPEGRGSLFEDSDLLHAGNPK) and 96 to 124 (AASQKHWETIPESKELTPEKDISEEESAP). The span at 100 to 116 (KHWETIPESKELTPEKD) shows a compositional bias: basic and acidic residues. C2H2-type zinc fingers lie at residues 221 to 243 (WKCNECEKAFSYYSAFVLHQRIH), 249 to 271 (YECNECGKAFSQSIHLTLHQRIH), 277 to 299 (YECHECGKAFSHRSALIRHHIIH), 305 to 327 (YECNECGKAFNQSSYLTQHQRIH), 333 to 355 (YECNECGKAFSQSTFLTQHQVIH), 361 to 383 (YKCNECGKAFSDRSGLIQHQRTH), 389 to 411 (YECNECGKAFGYCSALTQHQRTH), 417 to 439 (YKCNDCAKAFSDRSALIRHQRTH), 445 to 467 (YKCKDCGKAFSQSSSLTKHQKTH), and 473 to 495 (YKCKECGKAFSQSSSLSQHQKTH).

Belongs to the krueppel C2H2-type zinc-finger protein family.

The protein resides in the nucleus. In terms of biological role, may be involved in transcriptional regulation. The polypeptide is Zinc finger protein 892 (Homo sapiens (Human)).